Reading from the N-terminus, the 958-residue chain is Coiled-coil domain-containing protein 33 (958 aa).

The C2 domain maps to 214 to 353 (SPEEPLIASQ…LVKPTESGKA (140 aa)). The segment covering 602-617 (SKDTVSSTMDLSTSTP) has biased composition (polar residues). The tract at residues 602 to 628 (SKDTVSSTMDLSTSTPREAEEEPLVPE) is disordered. 2 coiled-coil regions span residues 632–774 (DTEM…LEDR) and 859–899 (FNLL…RLQE). Residues 899-958 (EQEKGFRHPSNSIIIEQPSALTHSMDLKQPSELEPLLPSSDSKLNKPLSPQKETANSQQT) are disordered. 2 stretches are compositionally biased toward polar residues: residues 907–920 (PSNS…SALT) and 949–958 (QKETANSQQT).

The sequence is that of Coiled-coil domain-containing protein 33 (CCDC33) from Homo sapiens (Human).